Reading from the N-terminus, the 408-residue chain is LL-diaminopimelate aminotransferase (408 aa).

Substrate is bound by residues Tyr15 and Gly42. Residues Tyr72, Ser108–Lys109, Tyr132, Asn187, Tyr218, and Ser246–Ser248 contribute to the pyridoxal 5'-phosphate site. Residues Lys109, Tyr132, and Asn187 each contribute to the substrate site. Lys249 carries the post-translational modification N6-(pyridoxal phosphate)lysine. Positions 257 and 292 each coordinate pyridoxal 5'-phosphate. Residues Asn292 and Arg388 each contribute to the substrate site.

The protein belongs to the class-I pyridoxal-phosphate-dependent aminotransferase family. LL-diaminopimelate aminotransferase subfamily. As to quaternary structure, homodimer. It depends on pyridoxal 5'-phosphate as a cofactor.

It catalyses the reaction (2S,6S)-2,6-diaminopimelate + 2-oxoglutarate = (S)-2,3,4,5-tetrahydrodipicolinate + L-glutamate + H2O + H(+). It participates in amino-acid biosynthesis; L-lysine biosynthesis via DAP pathway; LL-2,6-diaminopimelate from (S)-tetrahydrodipicolinate (aminotransferase route): step 1/1. Involved in the synthesis of meso-diaminopimelate (m-DAP or DL-DAP), required for both lysine and peptidoglycan biosynthesis. Catalyzes the direct conversion of tetrahydrodipicolinate to LL-diaminopimelate. This chain is LL-diaminopimelate aminotransferase, found in Prochlorococcus marinus (strain MIT 9313).